Reading from the N-terminus, the 432-residue chain is Ribosomal protein uS12 methylthiotransferase RimO (432 aa).

The MTTase N-terminal domain maps to 4–120; that stretch reads HNVFLLSLGC…LLQAIGAQYR (117 aa). [4Fe-4S] cluster contacts are provided by cysteine 13, cysteine 49, cysteine 83, cysteine 144, cysteine 148, and cysteine 151. Positions 130-359 constitute a Radical SAM core domain; the sequence is LTPPHISYLK…MELQETIAKE (230 aa). The region spanning 362–429 is the TRAM domain; sequence QLFEGKELTV…AYELHGTITA (68 aa).

It belongs to the methylthiotransferase family. RimO subfamily. [4Fe-4S] cluster is required as a cofactor.

Its subcellular location is the cytoplasm. The catalysed reaction is L-aspartate(89)-[ribosomal protein uS12]-hydrogen + (sulfur carrier)-SH + AH2 + 2 S-adenosyl-L-methionine = 3-methylsulfanyl-L-aspartate(89)-[ribosomal protein uS12]-hydrogen + (sulfur carrier)-H + 5'-deoxyadenosine + L-methionine + A + S-adenosyl-L-homocysteine + 2 H(+). Functionally, catalyzes the methylthiolation of an aspartic acid residue of ribosomal protein uS12. This is Ribosomal protein uS12 methylthiotransferase RimO from Chlorobium phaeobacteroides (strain DSM 266 / SMG 266 / 2430).